The following is a 319-amino-acid chain: 3-oxoacyl-[acyl-carrier-protein] reductase, chloroplastic (319 aa).

Residues 1-57 (MAAAVAAPRLISLKAVAKLGFREISQIRQLAPLHSAIPHFGMLRCRSRQPFSTSVVK) constitute a chloroplast transit peptide. Ala-58 is modified (N-acetylalanine). 81 to 105 (ITGASRGIGKAIALALGKAGCKVLV) serves as a coordination point for NADP(+). Residue Ser-213 participates in substrate binding. Catalysis depends on Tyr-226, which acts as the Proton acceptor.

It belongs to the short-chain dehydrogenases/reductases (SDR) family. Homotetramer.

It localises to the plastid. The protein localises to the chloroplast. The enzyme catalyses a (3R)-hydroxyacyl-[ACP] + NADP(+) = a 3-oxoacyl-[ACP] + NADPH + H(+). It participates in lipid metabolism; fatty acid biosynthesis. The sequence is that of 3-oxoacyl-[acyl-carrier-protein] reductase, chloroplastic from Arabidopsis thaliana (Mouse-ear cress).